A 194-amino-acid chain; its full sequence is Peptidyl-tRNA hydrolase (194 aa).

A tRNA-binding site is contributed by tyrosine 17. Histidine 22 serves as the catalytic Proton acceptor. Tyrosine 68, asparagine 70, and asparagine 116 together coordinate tRNA.

The protein belongs to the PTH family. As to quaternary structure, monomer.

The protein resides in the cytoplasm. It carries out the reaction an N-acyl-L-alpha-aminoacyl-tRNA + H2O = an N-acyl-L-amino acid + a tRNA + H(+). Hydrolyzes ribosome-free peptidyl-tRNAs (with 1 or more amino acids incorporated), which drop off the ribosome during protein synthesis, or as a result of ribosome stalling. Its function is as follows. Catalyzes the release of premature peptidyl moieties from peptidyl-tRNA molecules trapped in stalled 50S ribosomal subunits, and thus maintains levels of free tRNAs and 50S ribosomes. This Pseudomonas fluorescens (strain ATCC BAA-477 / NRRL B-23932 / Pf-5) protein is Peptidyl-tRNA hydrolase.